We begin with the raw amino-acid sequence, 74 residues long: DNA-directed RNA polymerase subunit omega (74 aa).

This sequence belongs to the RNA polymerase subunit omega family. In terms of assembly, the RNAP catalytic core consists of 2 alpha, 1 beta, 1 beta' and 1 omega subunit. When a sigma factor is associated with the core the holoenzyme is formed, which can initiate transcription.

The catalysed reaction is RNA(n) + a ribonucleoside 5'-triphosphate = RNA(n+1) + diphosphate. In terms of biological role, promotes RNA polymerase assembly. Latches the N- and C-terminal regions of the beta' subunit thereby facilitating its interaction with the beta and alpha subunits. The protein is DNA-directed RNA polymerase subunit omega of Solidesulfovibrio magneticus (strain ATCC 700980 / DSM 13731 / RS-1) (Desulfovibrio magneticus).